Reading from the N-terminus, the 143-residue chain is Large ribosomal subunit protein uL16 (143 aa).

It belongs to the universal ribosomal protein uL16 family. As to quaternary structure, part of the 50S ribosomal subunit.

Its function is as follows. Binds 23S rRNA and is also seen to make contacts with the A and possibly P site tRNAs. The protein is Large ribosomal subunit protein uL16 of Oenococcus oeni (strain ATCC BAA-331 / PSU-1).